A 151-amino-acid polypeptide reads, in one-letter code: Large ribosomal subunit protein bL9 (151 aa).

Belongs to the bacterial ribosomal protein bL9 family.

In terms of biological role, binds to the 23S rRNA. This chain is Large ribosomal subunit protein bL9, found in Carboxydothermus hydrogenoformans (strain ATCC BAA-161 / DSM 6008 / Z-2901).